Reading from the N-terminus, the 21-residue chain is Glutathione S-transferase 1 (21 aa).

Belongs to the GST superfamily. Phi family.

It carries out the reaction RX + glutathione = an S-substituted glutathione + a halide anion + H(+). Functionally, conjugation of reduced glutathione to a wide number of exogenous and endogenous hydrophobic electrophiles. In plants, may have a detoxification role against certain herbicides. The sequence is that of Glutathione S-transferase 1 from Populus euphratica (Euphrates poplar).